A 293-amino-acid chain; its full sequence is Ribosomal protein L11 methyltransferase (293 aa).

The S-adenosyl-L-methionine site is built by T145, G166, D188, and N230.

Belongs to the methyltransferase superfamily. PrmA family.

It is found in the cytoplasm. It catalyses the reaction L-lysyl-[protein] + 3 S-adenosyl-L-methionine = N(6),N(6),N(6)-trimethyl-L-lysyl-[protein] + 3 S-adenosyl-L-homocysteine + 3 H(+). In terms of biological role, methylates ribosomal protein L11. The polypeptide is Ribosomal protein L11 methyltransferase (Shewanella baltica (strain OS195)).